A 171-amino-acid polypeptide reads, in one-letter code: Large ribosomal subunit protein uL10 (171 aa).

This sequence belongs to the universal ribosomal protein uL10 family. Part of the ribosomal stalk of the 50S ribosomal subunit. The N-terminus interacts with L11 and the large rRNA to form the base of the stalk. The C-terminus forms an elongated spine to which L12 dimers bind in a sequential fashion forming a multimeric L10(L12)X complex.

Functionally, forms part of the ribosomal stalk, playing a central role in the interaction of the ribosome with GTP-bound translation factors. The polypeptide is Large ribosomal subunit protein uL10 (Zymomonas mobilis subsp. mobilis (strain ATCC 31821 / ZM4 / CP4)).